The primary structure comprises 338 residues: Lipopolysaccharide 1,2-glucosyltransferase (338 aa).

UDP-binding positions include 33–38 (GVDANY) and 130–131 (DA). Asp-130 and Asp-132 together coordinate Mg(2+). 2 short sequence motifs (DXD) span residues 130–132 (DAD) and 215–217 (DQD). Residue His-264 participates in Mg(2+) binding. Residue 264–270 (HYTGATK) participates in UDP binding.

Belongs to the glycosyltransferase 8 family. The cofactor is Mg(2+).

It localises to the cell inner membrane. It catalyses the reaction UDP-glucose + [lipopolysaccharide] = UDP + D-glucosyl-[lipopolysaccharide].. The catalysed reaction is alpha-D-Glc-(1-&gt;3)-[alpha-D-Gal-(1-&gt;6)]-alpha-D-Glc-(1-&gt;3)-[L-alpha-D-Hep-(1-&gt;7)]-4-O-PO3(2-)-L-alpha-D-Hep-(1-&gt;3)-4-O-PO3(2-)-L-alpha-D-Hep-(1-&gt;5)-[alpha-Kdo-(2-&gt;4)]-alpha-Kdo-(2-&gt;6)-lipid A + UDP-alpha-D-glucose = alpha-D-Glc-(1-&gt;2)-alpha-D-Glc-(1-&gt;3)-[alpha-D-Gal-(1-&gt;6)]-alpha-D-Glc-(1-&gt;3)-[L-alpha-D-Hep-(1-&gt;7)]-4-O-PO3(2-)-L-alpha-D-Hep-(1-&gt;3)-4-O-PO3(2-)-L-alpha-D-Hep-(1-&gt;5)-[alpha-Kdo-(2-&gt;4)]-alpha-Kdo-(2-&gt;6)-lipid A + UDP + H(+). It participates in bacterial outer membrane biogenesis; LPS core biosynthesis. In terms of biological role, glucosyltransferase involved in the biosynthesis of the core oligosaccharide region of lipopolysaccharide (LPS). Catalyzes the addition of a glucose (glucose III) to the outer-core glucose II. The sequence is that of Lipopolysaccharide 1,2-glucosyltransferase from Escherichia coli (strain K12).